Here is a 457-residue protein sequence, read N- to C-terminus: Ribulose bisphosphate carboxylase-like protein (457 aa).

Residues lysine 199, aspartate 201, and glutamate 202 each coordinate Mg(2+). Residue lysine 199 is modified to N6-carboxylysine. Residues 426–457 form a disordered region; it reads AIAAFGKPAHGQAASPQPSEQASEPDAAGGDS.

Belongs to the RuBisCO large chain family. Type IV subfamily. Mg(2+) serves as cofactor.

Its function is as follows. May be involved in sulfur metabolism and oxidative stress response. Does not show RuBisCO activity. In Allochromatium vinosum (strain ATCC 17899 / DSM 180 / NBRC 103801 / NCIMB 10441 / D) (Chromatium vinosum), this protein is Ribulose bisphosphate carboxylase-like protein.